A 301-amino-acid chain; its full sequence is Probable alpha-L-glutamate ligase (301 aa).

The 184-residue stretch at 104–287 (LQLLARKGVG…VAGMIINWTE (184 aa)) folds into the ATP-grasp domain. Residues Lys-141, 178-179 (EF), Asp-187, and 211-213 (RSN) each bind ATP. The Mg(2+) site is built by Asp-248, Glu-260, and Asn-262. Mn(2+) contacts are provided by Asp-248, Glu-260, and Asn-262.

This sequence belongs to the RimK family. It depends on Mg(2+) as a cofactor. Mn(2+) is required as a cofactor.

The sequence is that of Probable alpha-L-glutamate ligase from Marinobacter nauticus (strain ATCC 700491 / DSM 11845 / VT8) (Marinobacter aquaeolei).